Reading from the N-terminus, the 131-residue chain is MAINIIAQLEQEESARLLAARAIPDFRPGDTLRVNVKIKEGERERVQAYEGVCIARAGTGVHESFTVRKISFGEGVERLFPLLSPSIESIEVKRRGVVRRAKLYYLRDRRGKSARIAERAGGPKASASTEA.

Positions 112–131 are disordered; it reads KSARIAERAGGPKASASTEA.

It belongs to the bacterial ribosomal protein bL19 family.

This protein is located at the 30S-50S ribosomal subunit interface and may play a role in the structure and function of the aminoacyl-tRNA binding site. This is Large ribosomal subunit protein bL19 from Caulobacter vibrioides (strain ATCC 19089 / CIP 103742 / CB 15) (Caulobacter crescentus).